A 1282-amino-acid chain; its full sequence is Protein crumbs homolog 2 (1282 aa).

Residues 1-35 (MALVGPRIWGPRRDIYPLLLLLLLLLLLLLPWVPA) form the signal peptide. Residues 36 to 1221 (GLVPPETPSV…PLPLPFPLLE (1186 aa)) are Extracellular-facing. The region spanning 71 to 110 (ELGGCATQPCHHGALCVPQGPDPNSFRCYCVPGFQGPHCE) is the EGF-like 1 domain. 27 disulfides stabilise this stretch: Cys-75–Cys-86, Cys-80–Cys-98, Cys-100–Cys-109, Cys-116–Cys-127, Cys-121–Cys-136, Cys-138–Cys-147, Cys-154–Cys-165, Cys-159–Cys-174, Cys-176–Cys-185, Cys-192–Cys-203, Cys-197–Cys-212, Cys-214–Cys-224, Cys-231–Cys-242, Cys-236–Cys-251, Cys-253–Cys-262, Cys-269–Cys-280, Cys-274–Cys-310, Cys-312–Cys-321, Cys-328–Cys-339, Cys-333–Cys-348, Cys-350–Cys-359, Cys-366–Cys-377, Cys-371–Cys-386, Cys-388–Cys-397, Cys-404–Cys-415, Cys-409–Cys-428, and Cys-430–Cys-439. The region spanning 112–148 (DIDECASRPCQHGGTCQNLADHYECHCPLGYAGVTCE) is the EGF-like 2; calcium-binding domain. The region spanning 150 to 186 (EVDECSSAPCLHGGSCLDGVGSYRCVCAPGYAGANCQ) is the EGF-like 3; calcium-binding domain. Residues 188 to 225 (DVDECQSQPCAHGGVCHDLVNGFRCDCADTGYEGARCE) form the EGF-like 4; calcium-binding domain. EGF-like domains are found at residues 227–263 (EVLECASAPCAHNASCLDGFRSFRCLCWPGFSGERCE) and 265–322 (DEDE…NDCS). A glycan (N-linked (GlcNAc...) asparagine) is linked at Asn-239. Ser-271 carries O-linked (Glc...) serine glycosylation. The region spanning 324 to 360 (DVDECASGPCLNGGSCQDLPNGFQCYCQDGYTGLTCQ) is the EGF-like 7; calcium-binding domain. The EGF-like 8; calcium-binding domain occupies 362–398 (DMDECQSEPCLHGGTCSDTVAGYICQCPEAWGGHDCS). The 41-residue stretch at 400–440 (QLTGCQGHTCPLAATCIPTFKSGLHGYFCRCPPGTYGPFCG) folds into the EGF-like 9 domain. An N-linked (GlcNAc...) asparagine glycan is attached at Asn-442. In terms of domain architecture, Laminin G-like 1 spans 444-607 (TFSVVSGSSV…ELKGTVLLGC (164 aa)). 4 cysteine pairs are disulfide-bonded: Cys-583–Cys-607, Cys-613–Cys-624, Cys-618–Cys-633, and Cys-635–Cys-644. In terms of domain architecture, EGF-like 10 spans 609-645 (RREPCQPLPCAHGGACVDLWTHFRCDCPRPYRGATCT). One can recognise a Laminin G-like 2 domain in the interval 649–808 (PAATFGLGGA…GQSSNLTQGC (160 aa)). N-linked (GlcNAc...) asparagine glycosylation is found at Asn-672, Asn-693, Asn-789, and Asn-803. Disulfide bonds link Cys-769/Cys-808, Cys-814/Cys-825, Cys-819/Cys-834, and Cys-836/Cys-845. An EGF-like 11 domain is found at 810–846 (SEDTCNPNPCFNGGTCHVTWNDFYCTCSENFTGPTCA). N-linked (GlcNAc...) asparagine glycosylation is found at Asn-839, Asn-889, Asn-929, and Asn-1006. In terms of domain architecture, Laminin G-like 3 spans 872–1051 (VAEATFREGP…PGSPAVSLGC (180 aa)). Disulfide bonds link Cys-1010–Cys-1051, Cys-1057–Cys-1068, Cys-1062–Cys-1077, Cys-1079–Cys-1088, Cys-1095–Cys-1105, Cys-1100–Cys-1115, Cys-1117–Cys-1126, Cys-1135–Cys-1147, Cys-1141–Cys-1156, Cys-1158–Cys-1167, Cys-1174–Cys-1185, Cys-1179–Cys-1194, and Cys-1196–Cys-1205. 4 EGF-like domains span residues 1053–1089 (GGPVCSPSPCLHGGACRDLFDAFACSCGPAWEGPRCE), 1091–1127 (RADPCRSTPCVRGQCHARPDGRFECRCPPGFSGPRCR), 1131–1168 (LPQGCNLNSTCKDGAPCEGGPLGTNCSCQEGLAGLRCQ), and 1170–1206 (LDKPCEASPCLNGGTCRVASGIFECTCSAGFSGQFCE). N-linked (GlcNAc...) asparagine glycans are attached at residues Asn-1138 and Asn-1155. The helical transmembrane segment at 1222 to 1242 (VAVPAACACLLLLLLGLLSGI) threads the bilayer. Topologically, residues 1243–1282 (LAARKRRQSEGTYSPSQQEVAGARLEMDSVLKVPPEERLI) are cytoplasmic. Positions 1246 to 1282 (RKRRQSEGTYSPSQQEVAGARLEMDSVLKVPPEERLI) are interaction with EPB41L5.

It belongs to the Crumbs protein family. In terms of assembly, interacts (via intracellular domain) with EPB41L5. O-glucosylated by POGLUT1 at Ser-271; consists of an O-glucose trisaccharide, in which the O-glucose is elongated by the addition of two xylose residues. O-glucosylation is required for localization at the plasma membrane. As to expression, in the adult eye, strongly expressed in the outer nuclear layer, containing the cell bodies of the photoreceptor cells, and in the inner nuclear layer, containing the cell bodies of the horizontal, bipolar, amacrine, and Mueller glial cells. Also expressed in some cells in the ganglion cell layer (or may be displaced amacrine cells rather than ganglion cells).

Its subcellular location is the apical cell membrane. Apical polarity protein that plays a central role during the epithelial-to-mesenchymal transition (EMT) at gastrulation, when newly specified mesodermal cells move inside the embryo. Acts by promoting cell ingression, the process by which cells leave the epithelial epiblast and move inside the embryo to form a new tissue layer. The anisotropic distribution of CRB2 and MYH10/myosin-IIB at cell edges define which cells will ingress: cells with high apical CRB2 are probably extruded from the epiblast by neighboring cells with high levels of apical MYH10/myosin-IIB. Also required for maintenance of the apical polarity complex during development of the cortex. The protein is Protein crumbs homolog 2 of Mus musculus (Mouse).